A 159-amino-acid chain; its full sequence is 2-C-methyl-D-erythritol 2,4-cyclodiphosphate synthase (159 aa).

The a divalent metal cation site is built by D10 and H12. 4-CDP-2-C-methyl-D-erythritol 2-phosphate contacts are provided by residues 10–12 and 37–38; these read DVH and HS. Residue H45 coordinates a divalent metal cation. 4-CDP-2-C-methyl-D-erythritol 2-phosphate-binding positions include 59–61, 64–68, 103–109, 135–138, F142, and R145; these read DIG, FLDTD, AQAPKML, and TTTE.

Belongs to the IspF family. As to quaternary structure, homotrimer. The cofactor is a divalent metal cation.

The enzyme catalyses 4-CDP-2-C-methyl-D-erythritol 2-phosphate = 2-C-methyl-D-erythritol 2,4-cyclic diphosphate + CMP. It participates in isoprenoid biosynthesis; isopentenyl diphosphate biosynthesis via DXP pathway; isopentenyl diphosphate from 1-deoxy-D-xylulose 5-phosphate: step 4/6. Functionally, involved in the biosynthesis of isopentenyl diphosphate (IPP) and dimethylallyl diphosphate (DMAPP), two major building blocks of isoprenoid compounds. Catalyzes the conversion of 4-diphosphocytidyl-2-C-methyl-D-erythritol 2-phosphate (CDP-ME2P) to 2-C-methyl-D-erythritol 2,4-cyclodiphosphate (ME-CPP) with a corresponding release of cytidine 5-monophosphate (CMP). This is 2-C-methyl-D-erythritol 2,4-cyclodiphosphate synthase from Francisella tularensis subsp. tularensis (strain FSC 198).